The sequence spans 301 residues: Prestalk A differentiation protein A (301 aa).

Belongs to the NmrA-type oxidoreductase family.

Involved in development and cell differentiation. In Dictyostelium discoideum (Social amoeba), this protein is Prestalk A differentiation protein A (padA).